The chain runs to 615 residues: Medium-chain acyl-CoA ligase ACSF2, mitochondrial (615 aa).

The N-terminal 41 residues, Met1–Phe41, are a transit peptide targeting the mitochondrion. An N6-acetyllysine modification is found at Lys179. Residue Lys182 is modified to N6-acetyllysine; alternate. Lys182 carries the post-translational modification N6-succinyllysine; alternate. Thr263–Lys271 lines the ATP pocket. N6-acetyllysine occurs at positions 340 and 398. Residue Lys478 is modified to N6-succinyllysine. Residues Asp493 and Arg508 each coordinate ATP. At Lys510 the chain carries N6-acetyllysine. N6-acetyllysine; alternate is present on residues Lys544 and Lys570. 2 positions are modified to N6-succinyllysine; alternate: Lys544 and Lys570. An ATP-binding site is contributed by Lys599. N6-succinyllysine is present on Lys599.

The protein belongs to the ATP-dependent AMP-binding enzyme family.

Its subcellular location is the mitochondrion. The catalysed reaction is a medium-chain fatty acid + ATP + CoA = a medium-chain fatty acyl-CoA + AMP + diphosphate. It carries out the reaction octanoate + ATP + CoA = octanoyl-CoA + AMP + diphosphate. Functionally, acyl-CoA synthases catalyze the initial reaction in fatty acid metabolism, by forming a thioester with CoA. Has some preference toward medium-chain substrates. Plays a role in adipocyte differentiation. The protein is Medium-chain acyl-CoA ligase ACSF2, mitochondrial of Pongo abelii (Sumatran orangutan).